Reading from the N-terminus, the 764-residue chain is Acylamino-acid-releasing enzyme (764 aa).

Residues S618, D707, and H739 each act as charge relay system in the active site.

This sequence belongs to the peptidase S9C family. Homotetramer.

Its subcellular location is the cytoplasm. It localises to the nucleus. It catalyses the reaction Cleavage of an N-acetyl or N-formyl amino acid from the N-terminus of a polypeptide.. With respect to regulation, strongly inhibited by the serine protease inhibitor diisopropyl fluorophosphate. Functionally, catalyzes the hydrolysis of the N-terminal peptide bond of an N-acetylated peptide to generate an N-acetylated amino acid and a peptide with a free N-terminus. Can degrade the glycated RuBisCO (ribulose-1,5-bisphosphate carboxylase/oxygenase) protein but not the native protein. May be involved in the elimination of glycated proteins. Plays a homeostatic role in sustaining the cytoplasmic antioxidative system. May contribute to the elimination of the oxidized proteins in the cytoplasm. The protein is Acylamino-acid-releasing enzyme of Arabidopsis thaliana (Mouse-ear cress).